The following is a 126-amino-acid chain: Holo-[acyl-carrier-protein] synthase (126 aa).

Residues Asp9 and Glu58 each coordinate Mg(2+).

The protein belongs to the P-Pant transferase superfamily. AcpS family. It depends on Mg(2+) as a cofactor.

The protein resides in the cytoplasm. It carries out the reaction apo-[ACP] + CoA = holo-[ACP] + adenosine 3',5'-bisphosphate + H(+). In terms of biological role, transfers the 4'-phosphopantetheine moiety from coenzyme A to a Ser of acyl-carrier-protein. The protein is Holo-[acyl-carrier-protein] synthase of Yersinia enterocolitica serotype O:8 / biotype 1B (strain NCTC 13174 / 8081).